The following is a 382-amino-acid chain: Putative glutamate--cysteine ligase 2-1 (382 aa).

The protein belongs to the glutamate--cysteine ligase type 2 family. YbdK subfamily.

The enzyme catalyses L-cysteine + L-glutamate + ATP = gamma-L-glutamyl-L-cysteine + ADP + phosphate + H(+). Functionally, ATP-dependent carboxylate-amine ligase which exhibits weak glutamate--cysteine ligase activity. This is Putative glutamate--cysteine ligase 2-1 from Nocardioides sp. (strain ATCC BAA-499 / JS614).